A 272-amino-acid chain; its full sequence is Small ribosomal subunit protein uS3 (272 aa).

Positions 43–111 (IRELMTTGME…QIQLNILEVK (69 aa)) constitute a KH type-2 domain. Residues 218–272 (AKEAAQPSGRGRGGERRGGGERRRRNDRAERAPRQENAGAGAETPAAAPAEGGNA) are disordered. The segment covering 229–238 (RGGERRGGGE) has biased composition (basic and acidic residues). Over residues 253–272 (ENAGAGAETPAAAPAEGGNA) the composition is skewed to low complexity.

It belongs to the universal ribosomal protein uS3 family. Part of the 30S ribosomal subunit. Forms a tight complex with proteins S10 and S14.

Functionally, binds the lower part of the 30S subunit head. Binds mRNA in the 70S ribosome, positioning it for translation. This is Small ribosomal subunit protein uS3 from Micrococcus luteus (strain ATCC 4698 / DSM 20030 / JCM 1464 / CCM 169 / CCUG 5858 / IAM 1056 / NBRC 3333 / NCIMB 9278 / NCTC 2665 / VKM Ac-2230) (Micrococcus lysodeikticus).